Here is a 490-residue protein sequence, read N- to C-terminus: Histone-lysine N-methyltransferase, H3 lysine-9 specific (490 aa).

The region spanning 8–69 (YEVERIVDEK…RKRRLKGSNS (62 aa)) is the Chromo domain. Disordered regions lie at residues 61-133 (KRRL…TALT) and 150-190 (KKLG…KPRN). The span at 102-114 (FSRELNVKKENKK) shows a compositional bias: basic and acidic residues. Positions 115 to 133 (VFSSQTTKRQSRKQSTALT) are enriched in polar residues. Lys127 carries the post-translational modification N6,N6,N6-trimethyllysine; alternate. Lys127 carries the N6-methyllysine; alternate modification. Residues 155–168 (TRNEVKEESQKREL) are compositionally biased toward basic and acidic residues. Polar residues predominate over residues 169–185 (VSNSIKEATSPKTSSIL). Residues 258–325 (SGCNCSSLGG…ECPNRVVQRG (68 aa)) form the Pre-SET domain. 9 residues coordinate Zn(2+): Cys260, Cys262, Cys268, Cys276, Cys278, Cys307, Cys311, Cys313, and Cys317. The region spanning 328-452 (LPLEIFKTKE…PLEELTFDYA (125 aa)) is the SET domain. S-adenosyl-L-methionine is bound by residues 338-340 (KGW), Tyr381, Arg406, and 407-410 (FFNH). Cys412 contacts Zn(2+). The interval 453–472 (GAKDFSPVQSQKSQQNRISK) is autoregulatory loop. Lys455 bears the N6,N6,N6-trimethyllysine; by autocatalysis; alternate mark. Lys455 is subject to N6,N6-dimethyllysine; by autocatalysis; alternate. Lys455 carries the N6-methyllysine; by autocatalysis; alternate modification. The residue at position 464 (Lys464) is an N6-methyllysine. The Post-SET domain maps to 473–489 (LRRQCKCGSANCRGWLF). Zn(2+) is bound by residues Cys477, Cys479, and Cys484. 477-478 (CK) is an S-adenosyl-L-methionine binding site.

The protein belongs to the class V-like SAM-binding methyltransferase superfamily. Histone-lysine methyltransferase family. Suvar3-9 subfamily. Component of the Clr4 methyltransferase complex (ClrC) composed of at least clr4, rik1, pcu4, rbx1, raf1 and raf2. The cullin pcu4, rik1, raf1, raf2 and the ring-box protein rbx1 are components of an E3 ubiquitin ligase, whose activity is essential for heterochromatin assembly. Interacts directly with pcu4. Interacts with mlo3. In terms of processing, autocatalytic methylation of specific lysine residues in an internal loop (autoregulatory loop) promote a conformational switch that enhances the H3K9me activity of clr4.

Its subcellular location is the nucleus. It localises to the cytoplasm. The protein localises to the cytoskeleton. It is found in the microtubule organizing center. The protein resides in the spindle pole body. Its subcellular location is the chromosome. It catalyses the reaction L-lysyl(9)-[histone H3] + 3 S-adenosyl-L-methionine = N(6),N(6),N(6)-trimethyl-L-lysyl(9)-[histone H3] + 3 S-adenosyl-L-homocysteine + 3 H(+). It carries out the reaction N(6)-methyl-L-lysyl(9)-[histone H3] + S-adenosyl-L-methionine = N(6),N(6)-dimethyl-L-lysyl(9)-[histone H3] + S-adenosyl-L-homocysteine + H(+). The catalysed reaction is N(6),N(6)-dimethyl-L-lysyl(9)-[histone H3] + S-adenosyl-L-methionine = N(6),N(6),N(6)-trimethyl-L-lysyl(9)-[histone H3] + S-adenosyl-L-homocysteine + H(+). The enzyme catalyses L-lysyl-[protein] + S-adenosyl-L-methionine = N(6)-methyl-L-lysyl-[protein] + S-adenosyl-L-homocysteine + H(+). It catalyses the reaction N(6)-methyl-L-lysyl-[protein] + S-adenosyl-L-methionine = N(6),N(6)-dimethyl-L-lysyl-[protein] + S-adenosyl-L-homocysteine + H(+). It carries out the reaction N(6),N(6)-dimethyl-L-lysyl-[protein] + S-adenosyl-L-methionine = N(6),N(6),N(6)-trimethyl-L-lysyl-[protein] + S-adenosyl-L-homocysteine + H(+). The catalysed reaction is L-lysyl(9)-[histone H3] + S-adenosyl-L-methionine = N(6)-methyl-L-lysyl(9)-[histone H3] + S-adenosyl-L-homocysteine + H(+). Its activity is regulated as follows. An internal loop (autoregulatory loop) inhibits the catalytic activity of the enzyme by blocking the histone H3K9 substrate-binding pocket. Autocatalytic methylation of specific lysine residues in this loop promote a conformational switch that enhances the H3K9me activity of clr4. Its function is as follows. Histone methyltransferase which contributes to the establishment of heterochromatin by specifically methylating histone H3 to form H3K9me. Part of the Clr4 methyltransferase complex (ClrC). ClrC preferentially ubiquitylates H3K14 and ClrC-mediated H3 ubiquitination promotes clr4 methyltransferase activity. Clr4 functions as a reader and writer of H3K9 methylation. It sets the H3K9me mark and afterwards this H3K9me mark is recognized by the chromodomains of clr4 and swi6/HP1, which then recruit additional clr4 leading to the methylation of neighboring nucleosomes. H3K9me represents a specific tag for epigenetic transcriptional repression by recruiting swi6/HP1 to methylated histones which leads to transcriptional silencing within centromeric heterochromatin, telomeres, ribosomal DNA repeats, and the silent mating-type region. Clr4 methyltransferase activity promotes the assembly of a tripartite complex composed of ClrC and complexes involved in siRNA generation. Apart from H3K9, also methylates non-histone proteins such as mlo3. Interacts with mlo3 to promote the processing of centromeric and antisense RNAs. In Schizosaccharomyces pombe (strain 972 / ATCC 24843) (Fission yeast), this protein is Histone-lysine N-methyltransferase, H3 lysine-9 specific (clr4).